A 317-amino-acid polypeptide reads, in one-letter code: Glutathione synthetase (317 aa).

Positions 125–311 constitute an ATP-grasp domain; the sequence is EKMFATLFPQ…IGGKLMDAID (187 aa). 152–208 lines the ATP pocket; that stretch reads TAKHADVILKPLDGMGGTSIFRHRAGDPNLSVILETLTALGTQQIMAQAYLPAIKDG. 2 residues coordinate Mg(2+): Glu-282 and Asn-284.

This sequence belongs to the prokaryotic GSH synthase family. Mg(2+) serves as cofactor. It depends on Mn(2+) as a cofactor.

It catalyses the reaction gamma-L-glutamyl-L-cysteine + glycine + ATP = glutathione + ADP + phosphate + H(+). It functions in the pathway sulfur metabolism; glutathione biosynthesis; glutathione from L-cysteine and L-glutamate: step 2/2. This Pseudomonas putida (strain ATCC 47054 / DSM 6125 / CFBP 8728 / NCIMB 11950 / KT2440) protein is Glutathione synthetase.